Here is a 441-residue protein sequence, read N- to C-terminus: Alpha-monoglucosyldiacylglycerol synthase (441 aa).

The protein belongs to the glycosyltransferase group 1 family. Glycosyltransferase 4 subfamily. Mg(2+) serves as cofactor.

It localises to the cell membrane. It catalyses the reaction a 1,2-diacyl-sn-glycerol + UDP-alpha-D-glucose = a 1,2-diacyl-3-O-(alpha-D-glucopyranosyl)-sn-glycerol + UDP + H(+). With respect to regulation, activated by the negatively charged lipid phosphatidylglycerol (PG). Glucosyltransferase involved in the biosynthesis of the non-bilayer-prone membrane lipid alpha-monoglucosyldiacylglycerol. This is a major component for maintaining a certain anionic lipid surface charge density, for balancing the bilayer to non-bilayer phase equilibria and for keeping a constant lipid bilayer spontaneous curvature (curvature packing stress). Catalyzes the transfer of a glucosyl residue from UDP-Glc to diacylglycerol (DAG) acceptor to form the corresponding alpha-glucosyl-DAG (1,2-diacyl-3-O-(alpha-D-glucopyranosyl)-sn-glycerol). It can only use UDP-Glc as sugar donor. In Streptococcus pneumoniae (strain ATCC BAA-255 / R6), this protein is Alpha-monoglucosyldiacylglycerol synthase.